The primary structure comprises 843 residues: Glycogen phosphorylase, muscle form (843 aa).

Ser-2 carries the post-translational modification N-acetylserine. Position 15 is a phosphoserine; by PHK; in form phosphorylase A (Ser-15). 2 residues coordinate AMP: Asp-43 and Tyr-76. Tyr-204 and Tyr-227 each carry phosphotyrosine. Residue 310–319 coordinates AMP; the sequence is RRFKSSKFGC. A Phosphoserine modification is found at Ser-430. The residue at position 473 (Tyr-473) is a Phosphotyrosine. Ser-514 is modified (phosphoserine). Lys-681 bears the N6-(pyridoxal phosphate)lysine mark. Phosphoserine is present on residues Ser-747 and Ser-748.

It belongs to the glycogen phosphorylase family. As to quaternary structure, homodimer. Homotetramer; to form the enzymatically active phosphorylase A. Requires pyridoxal 5'-phosphate as cofactor. In terms of processing, phosphorylation of Ser-15 converts phosphorylase B (unphosphorylated) to phosphorylase A.

The enzyme catalyses [(1-&gt;4)-alpha-D-glucosyl](n) + phosphate = [(1-&gt;4)-alpha-D-glucosyl](n-1) + alpha-D-glucose 1-phosphate. Its activity is regulated as follows. Allosterically regulated through the non-covalent binding of metabolites, being activated by AMP and inhibited by ATP, ADP, and glucose-6-phosphate. The activity is also controlled by post-translational modifications including phosphorylation. Its function is as follows. Allosteric enzyme that catalyzes the rate-limiting step in glycogen catabolism, the phosphorolytic cleavage of glycogen to produce glucose-1-phosphate, and plays a central role in maintaining cellular and organismal glucose homeostasis. The polypeptide is Glycogen phosphorylase, muscle form (Oryctolagus cuniculus (Rabbit)).